A 964-amino-acid chain; its full sequence is uncharacterized protein (964 aa).

2 disordered regions span residues 1–31 (MDSE…SDCE) and 169–199 (EETY…DEIS). A compositionally biased stretch (polar residues) spans 10-27 (HSICNSVSSGENYKSPES). Residues 656–840 (EVMESLQVEI…LILNQTSMAK (185 aa)) adopt a coiled-coil conformation.

This is an uncharacterized protein from Caenorhabditis elegans.